The sequence spans 170 residues: IQPPKNLLFSSLLFSSLLFSSAAQAASEDRRSPYYVQADLAYAAERITHDYPQATGANNTSTVSDYFRNIRAHSIHPRVSVGYDFGGWRIAADYASYRKWNNNKYSVNTKELENKHNNKKDLKTENQENGTFHAASSLGLSAIYDFKLKGKFKPYIGARVAYGHVRHSID.

The protein belongs to the opacity porin family.

The protein localises to the cell outer membrane. This chain is Opacity-related protein POPM3 (opr), found in Neisseria meningitidis serogroup C.